The sequence spans 131 residues: uncharacterized protein (131 aa).

A run of 2 helical transmembrane segments spans residues 52 to 72 and 97 to 117; these read LIMIGIIELSYFISLGGFYLV and SDIISIFCSIAFVLFCIYDVG.

The protein resides in the membrane. This is an uncharacterized protein from Acanthamoeba polyphaga mimivirus (APMV).